A 345-amino-acid chain; its full sequence is uncharacterized protein (345 aa).

This sequence belongs to the Gfo/Idh/MocA family. Biliverdin reductase subfamily.

This is an uncharacterized protein from Escherichia coli (strain K12).